We begin with the raw amino-acid sequence, 437 residues long: MFDYILSLGGTVFVPIIMIVIGLIFRIPWLQAIKAGVTVGIGFVGMGLVIVMAIDSLSPPIKVMIERFGLALHVFDVGAGPASGVGYATAIGAMIIPVIFLLNVAMLVTRLTKTMNVDIYNYWHYAITGTVVQLMTGSLIYGVLGAICHAALSLKMADWTAKRVQNIVGLEGISIPQGYGSSSVPLFVLLDAIYEKIPFMKGRNIDAQEIQKRYGMVGDPVIIGVVLGLIFGLAAGEGFKGCASLMITVAAIMVLFPRMIRLIVEGLLPISDGARKFFQKYFKGREVYIGLDTAVTLGHPTTIAVGLLLIPIMLILASILPGNKVLPLADLPVAPFFICMATVIHRGDLVRTLISGVIVMITVLLIATQFAPYFTEMALKGGFSFAGESAQISALSVGNMFGWSISELMSLGIIGVVVAVGIVASVVLFLRKRELSE.

Residues 2 to 437 enclose the PTS EIIC type-2 domain; sequence FDYILSLGGT…LFLRKRELSE (436 aa). 12 helical membrane passes run 5–25, 35–55, 88–108, 134–154, 173–193, 215–235, 236–256, 302–322, 325–345, 354–374, 385–405, and 410–430; these read ILSL…GLIF, AGVT…MAID, ATAI…AMLV, LMTG…ALSL, ISIP…LDAI, GMVG…GLAA, GEGF…MVLF, TIAV…ILPG, VLPL…TVIH, ISGV…APYF, FAGE…GWSI, and SLGI…VLFL.

It is found in the cell inner membrane. Its function is as follows. The phosphoenolpyruvate-dependent sugar phosphotransferase system (PTS), a major carbohydrate active -transport system, catalyzes the phosphorylation of incoming sugar substrates concomitant with their translocation across the cell membrane. This is Putative permease IIC component (sgcC) from Escherichia coli (strain K12).